The chain runs to 452 residues: MGYSTISNDNDIKVCVIMVGLPARGKSFISQKIIRYLSWLSIKAKCFNVGNYRRDVSGNVPMDAEFFNFENTDNFKLRELAAQNAIKDIVNFFTKEDGSVAVFDATNSTRKRRKWLKDICEKNNIQPMFLESWSNDHELIINNAKDIGSTSPDYENSEPHVAEADFLERIRQYERFYEPLDPQKDKDMTFIKLVNIIEEVVINKIRTYLESRIVFYVMNIRPKPKYIWLSRHGESIYNVEKKIGGDSSLSERGFQYAKKLEQLVKESAGEINLTVWTSTLKRTQQTANYLPYKKLQWKALDELDAGVCDGMTYEEIEKEYPEDFKARDNDKYEYRYRGGESYRDVVIRLEPVIMELERQENVLIITHQAVLRCIYAYFMNVPQEESPWMSIPLHTLIKLEPRAYGTKVTKIKANIPAVSTYKEKGTSQVGELSQSSTKLHQLLNDSPLEDKF.

Positions 1 to 223 (MGYSTISNDN…VFYVMNIRPK (223 aa)) are 6-phosphofructo-2-kinase. Residue 20 to 28 (GLPARGKSF) coordinates ATP. Beta-D-fructose 6-phosphate contacts are provided by Arg-53 and Arg-78. The active site involves Asp-104. Beta-D-fructose 6-phosphate contacts are provided by Thr-106 and Arg-112. 143–148 (NAKDIG) is a binding site for ATP. Positions 169 and 173 each coordinate beta-D-fructose 6-phosphate. A fructose-2,6-bisphosphatase region spans residues 224–452 (PKYIWLSRHG…LNDSPLEDKF (229 aa)). Arg-231 lines the beta-D-fructose 2,6-bisphosphate pocket. His-232 acts as the Tele-phosphohistidine intermediate in catalysis. Positions 238 and 244 each coordinate beta-D-fructose 2,6-bisphosphate. Glu-302 (proton donor/acceptor) is an active-site residue. Beta-D-fructose 2,6-bisphosphate-binding residues include Tyr-313, Arg-327, Lys-331, Tyr-342, Gln-368, and Arg-372. 324–327 (FKAR) contacts ATP. ATP-binding positions include 368–372 (QAVLR) and Tyr-404. A phosphoserine mark is found at Ser-435 and Ser-446.

It in the C-terminal section; belongs to the phosphoglycerate mutase family.

The enzyme catalyses beta-D-fructose 2,6-bisphosphate + H2O = beta-D-fructose 6-phosphate + phosphate. Inhibited by fructose 6-P, activated by glycerol 3-P. Functionally, monofunctional, high-specificity fructose-2,6-bisphosphatase, which releases phosphate from the 2-position of fructose 2,6-bisphosphate. Has no detectable 6-phosphofructo-2-kinase activity. This is Fructose-2,6-bisphosphatase from Saccharomyces cerevisiae (strain ATCC 204508 / S288c) (Baker's yeast).